Consider the following 558-residue polypeptide: Dihydroxy-acid dehydratase (558 aa).

[2Fe-2S] cluster is bound at residue Cys50. Asp82 contacts Mg(2+). Cys123 provides a ligand contact to [2Fe-2S] cluster. Positions 124 and 125 each coordinate Mg(2+). Lys125 carries the post-translational modification N6-carboxylysine. Cys195 contacts [2Fe-2S] cluster. Residue Glu447 participates in Mg(2+) binding. Residue Ser472 is the Proton acceptor of the active site.

Belongs to the IlvD/Edd family. Homodimer. [2Fe-2S] cluster serves as cofactor. It depends on Mg(2+) as a cofactor.

It catalyses the reaction (2R)-2,3-dihydroxy-3-methylbutanoate = 3-methyl-2-oxobutanoate + H2O. It carries out the reaction (2R,3R)-2,3-dihydroxy-3-methylpentanoate = (S)-3-methyl-2-oxopentanoate + H2O. The protein operates within amino-acid biosynthesis; L-isoleucine biosynthesis; L-isoleucine from 2-oxobutanoate: step 3/4. It functions in the pathway amino-acid biosynthesis; L-valine biosynthesis; L-valine from pyruvate: step 3/4. Its function is as follows. Functions in the biosynthesis of branched-chain amino acids. Catalyzes the dehydration of (2R,3R)-2,3-dihydroxy-3-methylpentanoate (2,3-dihydroxy-3-methylvalerate) into 2-oxo-3-methylpentanoate (2-oxo-3-methylvalerate) and of (2R)-2,3-dihydroxy-3-methylbutanoate (2,3-dihydroxyisovalerate) into 2-oxo-3-methylbutanoate (2-oxoisovalerate), the penultimate precursor to L-isoleucine and L-valine, respectively. This is Dihydroxy-acid dehydratase from Saccharolobus islandicus (strain Y.N.15.51 / Yellowstone #2) (Sulfolobus islandicus).